Reading from the N-terminus, the 794-residue chain is Phosphoribosylformylglycinamidine synthase subunit PurL (794 aa).

Residue histidine 47 is part of the active site. ATP-binding residues include tyrosine 50 and lysine 89. Glutamate 91 lines the Mg(2+) pocket. Residues 92-95 (SHNH) and arginine 114 contribute to the substrate site. Histidine 93 (proton acceptor) is an active-site residue. Mg(2+) is bound at residue aspartate 115. Glutamine 238 is a substrate binding site. Residue aspartate 266 coordinates Mg(2+). 310–312 (ESQ) contacts substrate. ATP is bound by residues aspartate 522 and glycine 559. Asparagine 560 provides a ligand contact to Mg(2+). Serine 562 contributes to the substrate binding site.

Belongs to the FGAMS family. As to quaternary structure, monomer. Part of the FGAM synthase complex composed of 1 PurL, 1 PurQ and 2 PurS subunits.

The protein localises to the cytoplasm. The catalysed reaction is N(2)-formyl-N(1)-(5-phospho-beta-D-ribosyl)glycinamide + L-glutamine + ATP + H2O = 2-formamido-N(1)-(5-O-phospho-beta-D-ribosyl)acetamidine + L-glutamate + ADP + phosphate + H(+). Its pathway is purine metabolism; IMP biosynthesis via de novo pathway; 5-amino-1-(5-phospho-D-ribosyl)imidazole from N(2)-formyl-N(1)-(5-phospho-D-ribosyl)glycinamide: step 1/2. Functionally, part of the phosphoribosylformylglycinamidine synthase complex involved in the purines biosynthetic pathway. Catalyzes the ATP-dependent conversion of formylglycinamide ribonucleotide (FGAR) and glutamine to yield formylglycinamidine ribonucleotide (FGAM) and glutamate. The FGAM synthase complex is composed of three subunits. PurQ produces an ammonia molecule by converting glutamine to glutamate. PurL transfers the ammonia molecule to FGAR to form FGAM in an ATP-dependent manner. PurS interacts with PurQ and PurL and is thought to assist in the transfer of the ammonia molecule from PurQ to PurL. The chain is Phosphoribosylformylglycinamidine synthase subunit PurL from Prochlorococcus marinus (strain MIT 9313).